A 520-amino-acid chain; its full sequence is Cytochrome P450 monooxygenase vrtE (520 aa).

The chain crosses the membrane as a helical span at residues 16–36 (ALSLLHYVLGAIFLLLLFHML). N-linked (GlcNAc...) asparagine glycosylation occurs at Asn137. Cys459 lines the heme pocket.

The protein belongs to the cytochrome P450 family. It depends on heme as a cofactor.

The protein localises to the membrane. It participates in secondary metabolite biosynthesis; terpenoid biosynthesis. Cytochrome P450 monooxygenase; part of the gene cluster that mediates the biosynthesis of viridicatumtoxin, a tetracycline-like fungal meroterpenoid with a unique, fused spirobicyclic ring system. The first step of the pathway is the production of the malonamoyl-CoA starter unit for the polyketide synthase vrtA. The aldolase vrtJ may be involved in the synthesis of the malonamate substrate for malonamoyl-CoA synthetase vrtB. The polyketide synthase vrtA then may utilize the malonamoyl-CoA starter unit, followed by sequential condensation of eight malonyl-CoA units to form the polyketide backbone. The cyclization of the last ring could be mediated by the lactamase-like protein vrtG. The proposed post-PKS tailoring steps are a hydroxylation at C5 catalyzed the cytochrome P450 monooxygenase vrtE, a hydroxylation at C12a catalyzed by VrtH and/or VrtI, and an O-methylation by the O-methyltransferase vrtF. VrtC is then proposed to catalyze the transfer of a geranyl group synthesized by vrtD to the aromatic C ring of the tetracyclic polyketide intermediate of viridicatumtoxin to yield previridicatumtoxin. Finally, the cytochrome P450 monooxygenase vrtK catalyzes the spirocyclization of the geranyl moiety of previridicatumtoxin to afford viridicatumtoxin. This chain is Cytochrome P450 monooxygenase vrtE, found in Penicillium aethiopicum.